Consider the following 291-residue polypeptide: ATP synthase gamma chain (291 aa).

It belongs to the ATPase gamma chain family. As to quaternary structure, F-type ATPases have 2 components, CF(1) - the catalytic core - and CF(0) - the membrane proton channel. CF(1) has five subunits: alpha(3), beta(3), gamma(1), delta(1), epsilon(1). CF(0) has three main subunits: a, b and c.

It is found in the cell inner membrane. Functionally, produces ATP from ADP in the presence of a proton gradient across the membrane. The gamma chain is believed to be important in regulating ATPase activity and the flow of protons through the CF(0) complex. The sequence is that of ATP synthase gamma chain from Persephonella marina (strain DSM 14350 / EX-H1).